Consider the following 1549-residue polypeptide: MEELDGSLSQTRKAHRIEQMVARWLRRSRDSSARAKVAAADGPPGNPAQALTPVRHTVTLDKDVLLQNYGFHISETLPLTVVAVTAGGSAHGKLFPGDQILQMNNELAEDLSCERAADILRETEDALSITVVRCTSGVPKSSFLTEEKRARLKSNPVKVHFAEEVLVSGHSQGNSLLCMPNVLKVYLENGQTKAFKFEANTTVKDIILTVKEKLSIRSIEYFALALEEQYSISRLHLLHEEELVQQVVEREESQDSRCLFRVSFVPKDPLDLLKEDPVAFEYLYLQSCSDVLQERFAVEMKCNSALRLAALHIQERIYACAQPQKISLKYIEKDWGIENFISPTLLRNMKGKDIKKAISFHMKRNQNLLEPRQKQLISAAQLRLNYLQILGELKTYGGKVFNATLMLQDRESYIALLVGAKYGISQIINSKLNIISTLAEFANISRVELTEESEKVSMVKVYLQDVKVLTLLLESSSAKDLACLIAGYYRLFVDPANSVFHWSGNRRPTHRVSAEEGYESRACSDSEESSEVDCVLEPLSDRCLVKLSLCRPFAREEQPPGDSPTPEATRRGPSTCGASSMTDSAESEASDSANTESRGCRTSGSSESMDALEEDDLDACSSSGTSFFHFGPPGFSKGLETNSQEENSRVETSGFLCLLDLGQNANPQCQKIDGPQGLASEACSWGPELSMGRLDPRLYEGSRTDYYNLCSSISPGSHLSDSGSESTASRQGAAPPQWCQQGWMEAQSGSMLESLGLPALPPLAFEGGSSDEEYYDAADKLTPPDTLSGPRAADPSAMRLQSQSRTRGSEESLHPGPEGGEPSRQGGVKKYAKSLRKRRSFLQTDHTSQVSFPLEASASQENTDDVCYYDREPYLTLTAPSPTVSSLQDMQGEPGLLETKALGLLASLRETKSTNPASRIMEMEPETMETKSVIDSRVSSISAIRLRIDPSNTENPVTTDGSSASIPHSPHHSNPGSSSPQAAQVRPFPIVSPDQDPGGTTPKELTAEPEDSTFPLSSDHPNPDNPGPHHVSQGDTSELGEVRSEIGSESFLINHVQEVIPQITGPLCPGDGPTSGECEVNSEETALAADEVQGQLSLDSDREVMHRNGPSLFQKGSGKDLGDSKGDRLDNVPQALDVRAPAGEINSSLCSEPPATGTGQTSSDSEGENREAQEQELLTELDLAPDFLLPSAFPPETIKAEQLDRVIGEDSVPVSTSQQVCVHTVPSLPKLSPCQEEPRSADSGHGSPAESKGDDSPIICLPPERSFLCFAPESHPEGSTSLSRVTSFSFAGINEVAPAEIGIEHCRCQFSYATCFRGLQPETEEEDGDPQTHPAAPLTSPPSAGSQVTLPWRAARAYSCTTPLSRKSHIWPEFCSRALRQLKTTPTNAPEGFVQLTESLLELQDILEASWGVGNKHPPDKCTLHFSESRSRLCMGSQKLLASCQHVIRMDQSPEEMQGAVRVTFQHLVQLAGLCFQFTDCSRCSTRHREVAGNLRDVVYTYHQFVEAAKLTCERGYHDFSVKLLARQCTALTAAVFCLTQKFRASTAL.

The 79-residue stretch at threonine 57–threonine 135 folds into the PDZ domain. An FERM domain is found at asparagine 181–alanine 496. Disordered regions lie at residues alanine 554–aspartate 618, serine 717–tryptophan 738, tyrosine 775–serine 834, serine 913–isoleucine 1046, serine 1097–glutamate 1174, leucine 1231–proline 1257, and proline 1321–glutamine 1347. The span at serine 717–arginine 730 shows a compositional bias: polar residues. Residues glutamate 924–lysine 931 form an important for interaction with GPSM2 region. Residues proline 950–glycine 961 are compositionally biased toward polar residues. A compositionally biased stretch (low complexity) spans serine 962 to proline 980. Residues serine 1117–aspartate 1130 show a composition bias toward basic and acidic residues.

In terms of assembly, interacts with GPSM1. Interacts with GPSM2.

It localises to the cytoplasm. The protein localises to the cytosol. The protein resides in the cell membrane. Functionally, stabilizes membrane-bound GPSM1, and thereby promotes its interaction with GNAI1. This Mus musculus (Mouse) protein is FERM and PDZ domain-containing protein 1 (Frmpd1).